Here is a 637-residue protein sequence, read N- to C-terminus: Transcription termination factor FttA (637 aa).

A KHa region spans residues 4–71; it reads EDVLLDLKHK…IAMRPDPRVL (68 aa). Residues 72-139 are KHb; the sequence is ATPEDSISII…WIPKVVRTPP (68 aa). The metallo-beta-lactamase N-terminus stretch occupies residues 180–383; sequence WVRVTALGGC…VISEATYGNA (204 aa). Histidine 242, histidine 244, aspartate 246, histidine 247, histidine 329, and aspartate 352 together coordinate Zn(2+). The tract at residues 384–578 is beta-Casp; it reads NAFQPALKDA…MEVQVVDGFS (195 aa). Residues 579–637 are metallo-beta-lactamase C-terminus; it reads GHSDRRQLMEYVKRMQPRPERVFTEHGDEKACVDLASSVYKKLKIETRALTNLETVRLL. Histidine 604 serves as a coordination point for Zn(2+).

Belongs to the metallo-beta-lactamase superfamily. RNA-metabolizing metallo-beta-lactamase-like family. FttA subfamily. As to quaternary structure, homodimer. Interacts with RNA polymerase (RNAP), interacts with the Spt4-Spt5 complex. Zn(2+) is required as a cofactor.

Functionally, terminates transcription on the whole genome. Termination is linked to FttA-mediated RNA cleavage and does not require NTP hydrolysis. Cleaves endonucleolytically at the RNA exit channel of RNA polymerase (RNAP); the 5'-3' exonuclease activity of this protein degrades the nascent RNA released from RNAP. This chain is Transcription termination factor FttA, found in Methanosarcina mazei (strain ATCC BAA-159 / DSM 3647 / Goe1 / Go1 / JCM 11833 / OCM 88) (Methanosarcina frisia).